The primary structure comprises 291 residues: ATP synthase gamma chain (291 aa).

The protein belongs to the ATPase gamma chain family. As to quaternary structure, F-type ATPases have 2 components, CF(1) - the catalytic core - and CF(0) - the membrane proton channel. CF(1) has five subunits: alpha(3), beta(3), gamma(1), delta(1), epsilon(1). CF(0) has three main subunits: a, b and c.

Its subcellular location is the cell inner membrane. Functionally, produces ATP from ADP in the presence of a proton gradient across the membrane. The gamma chain is believed to be important in regulating ATPase activity and the flow of protons through the CF(0) complex. This chain is ATP synthase gamma chain, found in Nitratidesulfovibrio vulgaris (strain ATCC 29579 / DSM 644 / CCUG 34227 / NCIMB 8303 / VKM B-1760 / Hildenborough) (Desulfovibrio vulgaris).